Reading from the N-terminus, the 57-residue chain is MFSSRKRRVAKRAFNAKSKKFPIGEVVSTRKRLKQNTNTPPHYDTSEDEDEDNYYNY.

The disordered stretch occupies residues 26 to 57; sequence VVSTRKRLKQNTNTPPHYDTSEDEDEDNYYNY. Residues 46-57 show a composition bias toward acidic residues; the sequence is SEDEDEDNYYNY.

This is an uncharacterized protein from Autographa californica nuclear polyhedrosis virus (AcMNPV).